Here is a 77-residue protein sequence, read N- to C-terminus: Large ribosomal subunit protein bL28 (77 aa).

It belongs to the bacterial ribosomal protein bL28 family.

The sequence is that of Large ribosomal subunit protein bL28 from Methylibium petroleiphilum (strain ATCC BAA-1232 / LMG 22953 / PM1).